The following is a 359-amino-acid chain: Biotin synthase (359 aa).

The Radical SAM core domain occupies 67 to 302; the sequence is CCGNRVDLCS…QQILRYAGGR (236 aa). [4Fe-4S] cluster is bound by residues cysteine 85, cysteine 89, and cysteine 92. Residues cysteine 130, cysteine 167, cysteine 227, and arginine 297 each contribute to the [2Fe-2S] cluster site.

This sequence belongs to the radical SAM superfamily. Biotin synthase family. Homodimer. It depends on [4Fe-4S] cluster as a cofactor. Requires [2Fe-2S] cluster as cofactor.

It catalyses the reaction (4R,5S)-dethiobiotin + (sulfur carrier)-SH + 2 reduced [2Fe-2S]-[ferredoxin] + 2 S-adenosyl-L-methionine = (sulfur carrier)-H + biotin + 2 5'-deoxyadenosine + 2 L-methionine + 2 oxidized [2Fe-2S]-[ferredoxin]. It participates in cofactor biosynthesis; biotin biosynthesis; biotin from 7,8-diaminononanoate: step 2/2. Functionally, catalyzes the conversion of dethiobiotin (DTB) to biotin by the insertion of a sulfur atom into dethiobiotin via a radical-based mechanism. In Gloeothece citriformis (strain PCC 7424) (Cyanothece sp. (strain PCC 7424)), this protein is Biotin synthase.